The following is a 546-amino-acid chain: MQNINPTQTAAWSALEQHKADNLNIPQLFAEDANRFDKYHLNFEQQILVDFSKNAINQKTLELLRQLANECGLASATEAMFSGQKINRTENRAVLHTALRNRSNTPVLVDGKDVMPEVNAVLAKMKDFCERIISGSWKGYTGKAITDVINIGIGGSDLGPYMVTEALRPYKNHLNMHFVSNVDGTHIAEVLKKVNPETTLVLVASKTFTTQETMTNALTAREWLLAAVKDESAVAKHFAALSTNAKEVAKFGIDTANMFEFWDWVGGRYSLWSAIGLSIALSLGFENFEALLSGAHAMDNHFRTAPIEKNIPTTLALIGIWNSNFLGAETEALLPYDQYLHRFAAYFQQGNMESNGKFVGRDGSPVTHQTGPIVWGEPGTNGQHAFYQLIHQGTKLIPCDFIAPAQTHNPVGDHHAKLLSNFFAQTEALAFGKSKETVEAEFVAAGKNLADVAEIVPFKVFTGNKPTNSILVQKITPFTLGALIAMYEHKIFVQGVIFNIYSFDQWGVELGKQLANRILPELQNAEKISSHDSSTNGLINQFKAWR.

Catalysis depends on Glu353, which acts as the Proton donor. Catalysis depends on residues His384 and Lys512.

It belongs to the GPI family.

The protein resides in the cytoplasm. The enzyme catalyses alpha-D-glucose 6-phosphate = beta-D-fructose 6-phosphate. It participates in carbohydrate biosynthesis; gluconeogenesis. It functions in the pathway carbohydrate degradation; glycolysis; D-glyceraldehyde 3-phosphate and glycerone phosphate from D-glucose: step 2/4. Catalyzes the reversible isomerization of glucose-6-phosphate to fructose-6-phosphate. The chain is Glucose-6-phosphate isomerase from Actinobacillus pleuropneumoniae serotype 5b (strain L20).